Consider the following 90-residue polypeptide: Small ribosomal subunit protein bS16 (90 aa).

It belongs to the bacterial ribosomal protein bS16 family.

This is Small ribosomal subunit protein bS16 from Lactobacillus acidophilus (strain ATCC 700396 / NCK56 / N2 / NCFM).